Reading from the N-terminus, the 296-residue chain is Nitrogenase iron protein 1 (296 aa).

Residue 11-18 (GKGGIGKS) coordinates ATP. Cysteine 99 lines the [4Fe-4S] cluster pocket. At arginine 102 the chain carries ADP-ribosylarginine; by dinitrogenase reductase ADP-ribosyltransferase. [4Fe-4S] cluster is bound at residue cysteine 133.

This sequence belongs to the NifH/BchL/ChlL family. In terms of assembly, homodimer. It depends on [4Fe-4S] cluster as a cofactor. In terms of processing, the reversible ADP-ribosylation of Arg-102 inactivates the nitrogenase reductase and regulates nitrogenase activity.

It catalyses the reaction N2 + 8 reduced [2Fe-2S]-[ferredoxin] + 16 ATP + 16 H2O = H2 + 8 oxidized [2Fe-2S]-[ferredoxin] + 2 NH4(+) + 16 ADP + 16 phosphate + 6 H(+). The key enzymatic reactions in nitrogen fixation are catalyzed by the nitrogenase complex, which has 2 components: the iron protein and the molybdenum-iron protein. The protein is Nitrogenase iron protein 1 (nifH1) of Azorhizobium caulinodans (strain ATCC 43989 / DSM 5975 / JCM 20966 / LMG 6465 / NBRC 14845 / NCIMB 13405 / ORS 571).